Consider the following 231-residue polypeptide: uncharacterized protein (231 aa).

Residues 4-116 (RILVVEDDED…ELHARVIAQL (113 aa)) form the Response regulatory domain. Position 52 is a 4-aspartylphosphate (Asp52). Residues 129–230 (EETFLIGGKL…EWGRGYRFGA (102 aa)) constitute a DNA-binding region (ompR/PhoB-type).

Post-translationally, phosphorylated by YrkQ.

Its subcellular location is the cytoplasm. Functionally, member of the two-component regulatory system YrkQ/YrkP. This is an uncharacterized protein from Bacillus subtilis (strain 168).